Reading from the N-terminus, the 250-residue chain is AA9 family lytic polysaccharide monooxygenase F (250 aa).

An N-terminal signal peptide occupies residues 1-21 (MAMSKIATLAGLLASAGLVAG). Position 22 (histidine 22) interacts with Cu(2+). Aspartate 51 is a binding site for O2. 2 disulfide bridges follow: cysteine 77–cysteine 200 and cysteine 121–cysteine 125. Cu(2+) is bound at residue histidine 107. Histidine 186 and glutamine 195 together coordinate O2. Tyrosine 197 contributes to the Cu(2+) binding site.

It belongs to the glycosyl hydrolase 61 family. It depends on Cu(2+) as a cofactor.

The protein resides in the secreted. The enzyme catalyses Endohydrolysis of (1-&gt;4)-beta-D-glucosidic linkages in cellulose, lichenin and cereal beta-D-glucans.. Its function is as follows. Lytic polysaccharide monooxygenase (LMPO) that depolymerizes crystalline and amorphous polysaccharides via the oxidation of scissile alpha- or beta-(1-4)-glycosidic bonds, yielding C1 or C4 oxidation products. Catalysis by LPMOs requires the reduction of the active-site copper from Cu(II) to Cu(I) by a reducing agent and H(2)O(2) or O(2) as a cosubstrate. Major secreted component of the extracellular cellulolytic system. The protein is AA9 family lytic polysaccharide monooxygenase F of Emericella nidulans (strain FGSC A4 / ATCC 38163 / CBS 112.46 / NRRL 194 / M139) (Aspergillus nidulans).